The following is a 544-amino-acid chain: Chaperonin GroEL (544 aa).

Residues 29-32, Lys50, 86-90, Gly414, and Asp494 each bind ATP; these read TLGP and DGTTT.

The protein belongs to the chaperonin (HSP60) family. Forms a cylinder of 14 subunits composed of two heptameric rings stacked back-to-back. Interacts with the co-chaperonin GroES.

The protein localises to the cytoplasm. It catalyses the reaction ATP + H2O + a folded polypeptide = ADP + phosphate + an unfolded polypeptide.. Its function is as follows. Together with its co-chaperonin GroES, plays an essential role in assisting protein folding. The GroEL-GroES system forms a nano-cage that allows encapsulation of the non-native substrate proteins and provides a physical environment optimized to promote and accelerate protein folding. The polypeptide is Chaperonin GroEL (Amoebophilus asiaticus (strain 5a2)).